Reading from the N-terminus, the 509-residue chain is Dihydrolipoyl dehydrogenase, mitochondrial (509 aa).

The transit peptide at 1–35 (MQSWSRVYCTLAKRGHFNRIAHGLQGVSAVPLRTY) directs the protein to the mitochondrion. At Lys-66 the chain carries N6-acetyllysine; alternate. An N6-succinyllysine; alternate modification is found at Lys-66. FAD is bound by residues 71–80 (EKNETLGGTC) and Lys-89. Cys-80 and Cys-85 form a disulfide bridge. N6-acetyllysine; alternate is present on residues Lys-104, Lys-122, Lys-132, and Lys-143. 4 positions are modified to N6-succinyllysine; alternate: Lys-104, Lys-122, Lys-132, and Lys-143. Residue Gly-154 coordinates FAD. Lys-159 and Lys-166 each carry N6-succinyllysine. 183 to 185 (TGS) contributes to the FAD binding site. NAD(+) is bound by residues 220-227 (GAGVIGVE) and Glu-243. 2 positions are modified to N6-succinyllysine: Lys-273 and Lys-277. Residue Val-278 coordinates NAD(+). Phosphoserine occurs at positions 285 and 297. Gly-314 lines the NAD(+) pocket. Lys-346 is subject to N6-acetyllysine. Residues Asp-355 and 361–364 (MLAH) contribute to the FAD site. Lys-410 is modified (N6-acetyllysine; alternate). Lys-410 carries the N6-succinyllysine; alternate modification. N6-acetyllysine is present on residues Lys-417 and Lys-420. An N6-succinyllysine modification is found at Lys-430. Catalysis depends on His-487, which acts as the Proton acceptor. The residue at position 502 (Ser-502) is a Phosphoserine. Position 505 is an N6-acetyllysine; alternate (Lys-505). The residue at position 505 (Lys-505) is an N6-succinyllysine; alternate.

It belongs to the class-I pyridine nucleotide-disulfide oxidoreductase family. In terms of assembly, homodimer. Part of the multimeric pyruvate dehydrogenase complex that contains multiple copies of pyruvate dehydrogenase (subunits PDHA (PDHA1 or PDHA2) and PDHB, E1), dihydrolipoamide acetyltransferase (DLAT, E2) and lipoamide dehydrogenase (DLD, E3). These subunits are bound to an inner core composed of about 48 DLAT and 12 PDHX molecules (by non covalent bonds). The 2-oxoglutarate dehydrogenase complex is composed of OGDH (2-oxoglutarate dehydrogenase; E1), DLST (dihydrolipoamide succinyltransferase; E2), DLD (dihydrolipoamide dehydrogenase; E3) and the assembly factor KGD4. It contains multiple copies of the three enzymatic components (E1, E2 and E3). In the nucleus, the 2-oxoglutarate dehydrogenase complex associates with KAT2A. Interacts with PDHX. Requires FAD as cofactor. Tyrosine phosphorylated. Expressed in heart (at protein level).

The protein localises to the mitochondrion matrix. It localises to the nucleus. The protein resides in the cell projection. It is found in the cilium. Its subcellular location is the flagellum. The protein localises to the cytoplasmic vesicle. It localises to the secretory vesicle. The protein resides in the acrosome. It carries out the reaction N(6)-[(R)-dihydrolipoyl]-L-lysyl-[protein] + NAD(+) = N(6)-[(R)-lipoyl]-L-lysyl-[protein] + NADH + H(+). Lipoamide dehydrogenase is a component of the glycine cleavage system as well as an E3 component of three alpha-ketoacid dehydrogenase complexes (pyruvate-, alpha-ketoglutarate-, and branched-chain amino acid-dehydrogenase complex). The 2-oxoglutarate dehydrogenase complex is mainly active in the mitochondrion. A fraction of the 2-oxoglutarate dehydrogenase complex also localizes in the nucleus and is required for lysine succinylation of histones: associates with KAT2A on chromatin and provides succinyl-CoA to histone succinyltransferase KAT2A. In monomeric form may have additional moonlighting function as serine protease. Involved in the hyperactivation of spermatazoa during capacitation and in the spermatazoal acrosome reaction. The sequence is that of Dihydrolipoyl dehydrogenase, mitochondrial (DLD) from Sus scrofa (Pig).